The sequence spans 598 residues: Thiamine transporter (598 aa).

The Cytoplasmic segment spans residues Met1–Thr41. The helical transmembrane segment at Trp42–Met62 threads the bilayer. Residues Ser63–Ser73 lie on the Extracellular side of the membrane. Residues Tyr74 to Ala94 traverse the membrane as a helical segment. The Cytoplasmic segment spans residues Asn95–Arg111. The helical transmembrane segment at Phe112 to Val132 threads the bilayer. Residues Asn133–Glu173 are Extracellular-facing. A helical membrane pass occupies residues Leu174 to His194. Residues Met195 to Tyr197 are Cytoplasmic-facing. Residues Ile198–Ala218 traverse the membrane as a helical segment. Residues Lys219–Lys240 lie on the Extracellular side of the membrane. Residues Ala241–Asn261 traverse the membrane as a helical segment. Over Gln262 to Ala274 the chain is Cytoplasmic. A helical transmembrane segment spans residues Ile275–Val295. Residues Ile296–Ala332 are Extracellular-facing. Residues Phe333–Phe353 form a helical membrane-spanning segment. The Cytoplasmic segment spans residues Ala354–Arg371. A helical membrane pass occupies residues Gly372 to Ser392. The Extracellular portion of the chain corresponds to Ser393–Thr394. The helical transmembrane segment at Phe395 to Cys415 threads the bilayer. The Cytoplasmic portion of the chain corresponds to Asp416–Arg446. The chain crosses the membrane as a helical span at residues Ala447–Asn467. Residues Asn468–Asp483 are Extracellular-facing. A helical membrane pass occupies residues Ser484–Phe504. Over Lys505–Ala598 the chain is Cytoplasmic. Residue Ser560 is modified to Phosphoserine. The segment at Asn574–Ala598 is disordered. Positions Lys588–Ala598 are enriched in polar residues.

Belongs to the purine-cytosine permease (2.A.39) family.

It is found in the membrane. In terms of biological role, responsible for intake of thiamine. In Saccharomyces cerevisiae (strain ATCC 204508 / S288c) (Baker's yeast), this protein is Thiamine transporter (THI7).